Reading from the N-terminus, the 428-residue chain is Tryptophan synthase beta chain (428 aa).

At Lys-100 the chain carries N6-(pyridoxal phosphate)lysine.

Belongs to the TrpB family. Tetramer of two alpha and two beta chains. Pyridoxal 5'-phosphate is required as a cofactor.

The enzyme catalyses (1S,2R)-1-C-(indol-3-yl)glycerol 3-phosphate + L-serine = D-glyceraldehyde 3-phosphate + L-tryptophan + H2O. Its pathway is amino-acid biosynthesis; L-tryptophan biosynthesis; L-tryptophan from chorismate: step 5/5. In terms of biological role, the beta subunit is responsible for the synthesis of L-tryptophan from indole and L-serine. This Streptomyces avermitilis (strain ATCC 31267 / DSM 46492 / JCM 5070 / NBRC 14893 / NCIMB 12804 / NRRL 8165 / MA-4680) protein is Tryptophan synthase beta chain.